The primary structure comprises 376 residues: Chaperone protein DnaJ (376 aa).

The J domain maps to 4–68 (DYYDILGVDR…DTRSRYDQFG (65 aa)). Residues 135-217 (GGEKEIRIPH…CNGAGRRQVT (83 aa)) form a CR-type zinc finger. Residues Cys148, Cys151, Cys165, Cys168, Cys191, Cys194, Cys205, and Cys208 each contribute to the Zn(2+) site. 4 CXXCXGXG motif repeats span residues 148 to 155 (CQVCKGDG), 165 to 172 (CSTCNGQG), 191 to 198 (CPACNGQG), and 205 to 212 (CEVCNGAG).

The protein belongs to the DnaJ family. As to quaternary structure, homodimer. Zn(2+) serves as cofactor.

It localises to the cytoplasm. In terms of biological role, participates actively in the response to hyperosmotic and heat shock by preventing the aggregation of stress-denatured proteins and by disaggregating proteins, also in an autonomous, DnaK-independent fashion. Unfolded proteins bind initially to DnaJ; upon interaction with the DnaJ-bound protein, DnaK hydrolyzes its bound ATP, resulting in the formation of a stable complex. GrpE releases ADP from DnaK; ATP binding to DnaK triggers the release of the substrate protein, thus completing the reaction cycle. Several rounds of ATP-dependent interactions between DnaJ, DnaK and GrpE are required for fully efficient folding. Also involved, together with DnaK and GrpE, in the DNA replication of plasmids through activation of initiation proteins. The protein is Chaperone protein DnaJ of Crocosphaera subtropica (strain ATCC 51142 / BH68) (Cyanothece sp. (strain ATCC 51142)).